The chain runs to 678 residues: Exoribonuclease 2 (678 aa).

Residues 193-521 (REDLTALPFV…INHRLLKAHI (329 aa)) form the RNB domain. One can recognise an S1 motif domain in the interval 568-650 (ETRFQAEIFD…ENRSLVGKPT (83 aa)). The interval 658 to 678 (SETQTSTEQPAEGAENNEPQA) is disordered.

Belongs to the RNR ribonuclease family. RNase II subfamily.

It localises to the cytoplasm. It carries out the reaction Exonucleolytic cleavage in the 3'- to 5'-direction to yield nucleoside 5'-phosphates.. In terms of biological role, involved in mRNA degradation. Hydrolyzes single-stranded polyribonucleotides processively in the 3' to 5' direction. This Vibrio cholerae serotype O1 (strain ATCC 39541 / Classical Ogawa 395 / O395) protein is Exoribonuclease 2.